The following is a 444-amino-acid chain: Maturase K (444 aa).

This sequence belongs to the intron maturase 2 family. MatK subfamily.

It localises to the plastid. Its subcellular location is the chloroplast. Functionally, usually encoded in the trnK tRNA gene intron. Probably assists in splicing its own and other chloroplast group II introns. In Chamaecyparis lawsoniana (Lawson false cypress), this protein is Maturase K.